A 485-amino-acid chain; its full sequence is MHFTSSLLATLIWFTLPVQSLNTESRTTSNNTISILTNHFQILKDLLPYSKTSKPQIKESRPLIKVSRDGVPINFHRAPAIIMKSNKTDDLVRNSNKTMVLTEIKTITEFATTTVSPTQEFQALQINLNTLSIETSTPTFQSHDFPPITIEDTPKTLEPEESSDALQRDAFDQIKKLEKLVLDLRLEMKEQQKSFNDQLVDIYTARSIVPIYTTHIVTSAIPSYVPKEEVMVSHDSAPIVSRPRTDIPVSQRIDTISKHKMNGKNILNNNPPPNSVLIVPQFQFHERMATKTEVAYMKPKIVWTNFPTTTATSMFDNFILKNLVDETDSEIDSGETELSDDYYYYYSYEDDGKEDDSDEITAQILLSNSELGTKTPNFEDPFEQINIEDNKVISVNTPKTKKPTTTVFGTSTSALSTFESTIFEIPKFFYGSRRKQPSSFKNKNSTIKFDVFDWIFESGTTNEKVHGLVLVSSGVLLGTCLLFIL.

Residues 1–20 (MHFTSSLLATLIWFTLPVQS) form the signal peptide. N30, N86, N96, and N444 each carry an N-linked (GlcNAc...) asparagine glycan. G467 carries GPI-anchor amidated glycine lipidation. Residues 468–485 (LVLVSSGVLLGTCLLFIL) constitute a propeptide, removed in mature form.

The protein localises to the cell membrane. This is Predicted GPI-anchored protein 27 (PGA27) from Candida albicans (strain SC5314 / ATCC MYA-2876) (Yeast).